Reading from the N-terminus, the 314-residue chain is Transmembrane protein 248 (314 aa).

The helical transmembrane segment at 21-41 (VVFMISVSAMAIAFLTLGYFF) threads the bilayer. A disordered region spans residues 78–106 (LTNDTTTPESTMTSGQARASTQSPQALED). Residues 80–102 (NDTTTPESTMTSGQARASTQSPQ) are compositionally biased toward polar residues. The next 3 helical transmembrane spans lie at 179 to 199 (QVVFTACMTLTASPGVFPVTV), 236 to 258 (FWCYKGAIGKVYHALNPKLTVIV), and 270 to 290 (LMHTSYFLFVMVITMFCYAVI).

It belongs to the TMEM248 family.

Its subcellular location is the membrane. This chain is Transmembrane protein 248 (TMEM248), found in Homo sapiens (Human).